Reading from the N-terminus, the 278-residue chain is Undecaprenyl-diphosphatase 1 (278 aa).

5 helical membrane-spanning segments follow: residues 85–105 (LNVI…EKTI), 108–128 (ALFS…VILW), 188–208 (VATE…TAYE), 218–238 (VDAL…AFAC), and 254–274 (FAWY…SGAL).

Belongs to the UppP family.

The protein localises to the cell inner membrane. It catalyses the reaction di-trans,octa-cis-undecaprenyl diphosphate + H2O = di-trans,octa-cis-undecaprenyl phosphate + phosphate + H(+). Functionally, catalyzes the dephosphorylation of undecaprenyl diphosphate (UPP). Confers resistance to bacitracin. This chain is Undecaprenyl-diphosphatase 1, found in Paraburkholderia xenovorans (strain LB400).